An 806-amino-acid chain; its full sequence is Mitogen-activated protein kinase 7 (806 aa).

Residues 1 to 23 (MAEPLKEEDGEDGSGEPPGRVKA) form a disordered region. Residue A2 is modified to N-acetylalanine. Residues 2–77 (AEPLKEEDGE…VVSSARRRLT (76 aa)) are required for cytoplasmic targeting. In terms of domain architecture, Protein kinase spans 55-347 (YEIIETIGNG…AAAALRHPFL (293 aa)). Residues 61–69 (IGNGAYGVV) and K84 each bind ATP. The segment at 78–139 (GQQVAIKKIP…FRSVYVVLDL (62 aa)) is required for binding to MAP2K5. The tract at residues 140–406 (MESDLHQIIH…QQIRFQPSLQ (267 aa)) is necessary for oligomerization. Residue D182 is the Proton acceptor of the active site. Residues 219-221 (TEY) carry the TXY motif. The may not be required for kinase activity; required to stimulate MEF2C activity stretch occupies residues 407-806 (PVASEPVCPD…LSDLPDLQEP (400 aa)). Disordered stretches follow at residues 424-473 (APSG…AISD) and 488-727 (RSRL…PKGS). The segment covering 433-443 (SPPPALPPCSD) has biased composition (pro residues). Basic and acidic residues-rich tracts occupy residues 502–519 (PEPR…EREE), 527–544 (RAKE…KERG), and 563–573 (DNDRSLLERWT). The short motif at 505 to 539 (RKPVTAQERQREREEKRRRRQERAKEREKRRQERE) is the Nuclear localization signal element. Residues 578 to 592 (PPAPAPAPAPAPAPA) show a composition bias toward pro residues. Residues 593–603 (PSSAQPTSTPT) show a composition bias toward low complexity. Over residues 627–643 (VCPPPGPVPQPAGPIPA) the composition is skewed to pro residues. Positions 647–660 (TAPSTSLLASQSLV) are enriched in polar residues. Pro residues predominate over residues 678–689 (PSGPPPPDPGLT). Residues 693–710 (STSESPDVNLVTQQLSKS) are compositionally biased toward polar residues. At S710 the chain carries Phosphoserine. A Phosphothreonine modification is found at T723.

This sequence belongs to the protein kinase superfamily. CMGC Ser/Thr protein kinase family. MAP kinase subfamily. Interacts with MAP2K5. Forms oligomers. Interacts with MEF2A, MEF2C and MEF2D; the interaction phosphorylates the MEF2s and enhances transcriptional activity of MEF2A, MEF2C but not MEF2D. Interacts with SGK1. Interacts with PML. Interacts (via N-terminal half) with HSP90AB1-CDC37 chaperone complex in resting cells; the interaction is MAP2K5-independent and prevents MAPK7 from ubiquitination and proteasomal degradation. Interacts with STUB1/CHIP; the interaction is enhanced in the presence of IGF1 or MAP2K5 and promotes STUB1/CHIP E3 ligase activity. It depends on Mg(2+) as a cofactor. In terms of processing, dually phosphorylated on Thr-219 and Tyr-221, which activates the enzyme. As to expression, detected in testis, brain, kidney, lung and heart. Detected in total embryo (at protein level).

It is found in the cytoplasm. The protein resides in the nucleus. It localises to the PML body. The enzyme catalyses L-seryl-[protein] + ATP = O-phospho-L-seryl-[protein] + ADP + H(+). The catalysed reaction is L-threonyl-[protein] + ATP = O-phospho-L-threonyl-[protein] + ADP + H(+). With respect to regulation, activated by tyrosine and threonine phosphorylation. Activated in response to hyperosmolarity, hydrogen peroxide, and epidermal growth factor (EGF). Functionally, plays a role in various cellular processes such as proliferation, differentiation and cell survival. The upstream activator of MAPK7 is the MAPK kinase MAP2K5. Upon activation, it translocates to the nucleus and phosphorylates various downstream targets including MEF2C. EGF activates MAPK7 through a Ras-independent and MAP2K5-dependent pathway. As part of the MAPK/ERK signaling pathway, acts as a negative regulator of apoptosis in cardiomyocytes via interaction with STUB1/CHIP and promotion of STUB1-mediated ubiquitination and degradation of ICER-type isoforms of CREM. May have a role in muscle cell differentiation. May be important for endothelial function and maintenance of blood vessel integrity. MAP2K5 and MAPK7 interact specifically with one another and not with MEK1/ERK1 or MEK2/ERK2 pathways. Phosphorylates SGK1 at Ser-78 and this is required for growth factor-induced cell cycle progression. Involved in the regulation of p53/TP53 by disrupting the PML-MDM2 interaction. This chain is Mitogen-activated protein kinase 7 (Mapk7), found in Mus musculus (Mouse).